A 310-amino-acid chain; its full sequence is Bis(hydroxyethyl) terephthalate hydrolase (310 aa).

The segment at residues 1–48 (MQQNPHTHAAPGAARPVLRGVRRRLAAVTAAVAAVLVLGTLTGPGAQA) is a signal peptide (tat-type signal). Residue phenylalanine 111 coordinates bis(2-hydroxyethyl) terephthalate. Serine 179 serves as the catalytic Nucleophile. Methionine 180 and tryptophan 204 together coordinate bis(2-hydroxyethyl) terephthalate. Active-site charge relay system residues include aspartate 225 and histidine 257. Cysteine 290 and cysteine 306 are oxidised to a cystine.

It belongs to the AB hydrolase superfamily. Post-translationally, predicted to be exported by the Tat system. The position of the signal peptide cleavage has not been experimentally proven.

The protein localises to the secreted. The enzyme catalyses bis(2-hydroxyethyl) terephthalate + H2O = 4-[(2-hydroxyethoxy)carbonyl]benzoate + ethylene glycol + H(+). Catalyzes the degradation of bis(hydroxyethyl) terephthalate (BHET), a derived-oligomer of the plastic poly(ethylene terephthalate) (PET), hydrolyzing BHET to mono(2-hydroxyethyl) terephthalate (MHET). Shows no activity against PET. This chain is Bis(hydroxyethyl) terephthalate hydrolase, found in Streptomyces coelicolor (strain ATCC BAA-471 / A3(2) / M145).